A 95-amino-acid polypeptide reads, in one-letter code: Co-chaperonin GroES (95 aa).

This sequence belongs to the GroES chaperonin family. As to quaternary structure, heptamer of 7 subunits arranged in a ring. Interacts with the chaperonin GroEL.

The protein localises to the cytoplasm. Its function is as follows. Together with the chaperonin GroEL, plays an essential role in assisting protein folding. The GroEL-GroES system forms a nano-cage that allows encapsulation of the non-native substrate proteins and provides a physical environment optimized to promote and accelerate protein folding. GroES binds to the apical surface of the GroEL ring, thereby capping the opening of the GroEL channel. The protein is Co-chaperonin GroES of Staphylococcus haemolyticus (strain JCSC1435).